The chain runs to 137 residues: Phospholipase A2 group V (137 aa).

The signal sequence occupies residues 1–20 (MKRLLTLAWFLACSVPAVPG). Cystine bridges form between Cys46–Cys137, Cys48–Cys64, Cys63–Cys117, Cys70–Cys110, Cys79–Cys103, and Cys97–Cys108. 3 residues coordinate Ca(2+): Tyr47, Gly49, and Gly51. His67 is a catalytic residue. Asp68 is a binding site for Ca(2+). The active site involves Asp111.

This sequence belongs to the phospholipase A2 family. Requires Ca(2+) as cofactor. In terms of processing, this enzyme lacks one of the seven disulfide bonds found in similar PA2 proteins.

The protein resides in the secreted. The protein localises to the cell membrane. Its subcellular location is the cytoplasmic vesicle. It localises to the phagosome. It is found in the recycling endosome. The protein resides in the golgi apparatus. The protein localises to the cis-Golgi network. Its subcellular location is the trans-Golgi network. It catalyses the reaction a 1,2-diacyl-sn-glycero-3-phosphocholine + H2O = a 1-acyl-sn-glycero-3-phosphocholine + a fatty acid + H(+). The enzyme catalyses 1-hexadecanoyl-2-(9Z-octadecenoyl)-sn-glycero-3-phosphocholine + H2O = 1-hexadecanoyl-sn-glycero-3-phosphocholine + (9Z)-octadecenoate + H(+). It carries out the reaction 1-hexadecanoyl-2-(5Z,8Z,11Z,14Z-eicosatetraenoyl)-sn-glycero-3-phosphocholine + H2O = 1-hexadecanoyl-sn-glycero-3-phosphocholine + (5Z,8Z,11Z,14Z)-eicosatetraenoate + H(+). The catalysed reaction is 1-hexadecanoyl-2-(9Z,12Z-octadecadienoyl)-sn-glycero-3-phosphoethanolamine + H2O = 1-hexadecanoyl-sn-glycero-3-phosphoethanolamine + (9Z,12Z)-octadecadienoate + H(+). It catalyses the reaction 1-hexadecanoyl-2-(5Z,8Z,11Z,14Z-eicosatetraenoyl)-sn-glycero-3-phosphoethanolamine + H2O = 1-hexadecanoyl-sn-glycero-3-phosphoethanolamine + (5Z,8Z,11Z,14Z)-eicosatetraenoate + H(+). The enzyme catalyses 1-octadecanoyl-2-(5Z,8Z,11Z,14Z-eicosatetraenoyl)-sn-glycero-3-phospho-(1D-myo-inositol) + H2O = 1-octadecanoyl-sn-glycero-3-phospho-(1D-myo-inositol) + (5Z,8Z,11Z,14Z)-eicosatetraenoate + H(+). It carries out the reaction 1-hexadecanoyl-2-(9Z-octadecenoyl)-sn-glycero-3-phosphoglycerol + H2O = 1-hexadecanoyl-sn-glycero-3-phosphoglycerol + (9Z)-octadecenoate + H(+). The catalysed reaction is N-hexadecanoyl-1,2-di-(9Z-octadecenoyl)-sn-glycero-3-phosphoethanolamine + H2O = N-hexadecanoyl-1-(9Z-octadecenoyl)-sn-glycero-3-phosphoethanolamine + (9Z)-octadecenoate + H(+). It catalyses the reaction 1'-[1,2-di-(9Z-octadecenoyl)-sn-glycero-3-phospho]-3'-[1-(9Z-octadecenoyl)-sn-glycero-3-phospho]-glycerol + H2O = 1',3'-bis-[1-(9Z-octadecenoyl)-sn-glycero-3-phospho]-glycerol + (9Z)-octadecenoate + H(+). The enzyme catalyses 1',3'-bis[1,2-di-(9Z-octadecenoyl)-sn-glycero-3-phospho]-glycerol + H2O = 1'-[1,2-di-(9Z-octadecenoyl)-sn-glycero-3-phospho]-3'-[1-(9Z-octadecenoyl)-sn-glycero-3-phospho]-glycerol + (9Z)-octadecenoate + H(+). It functions in the pathway lipid metabolism; phospholipid metabolism. Its pathway is lipid metabolism; leukotriene B4 biosynthesis. The protein operates within lipid metabolism; leukotriene C4 biosynthesis. Secretory calcium-dependent phospholipase A2 that primarily targets extracellular phospholipids. Hydrolyzes the ester bond of the fatty acyl group attached at sn-2 position of phospholipids (phospholipase A2 activity), preferentially releasing fatty acyl groups with a low degree of unsaturation such as oleoyl (C18:1) and linoleoyl (C18:2) groups. Hydrolyzes low-density lipoprotein (LDL) phospholipids releasing unsaturated fatty acids that drive macrophage polarization toward an M2 phenotype. May act in an autocrine and paracrine manner. Contributes to lipid remodeling of cellular membranes at different subcellular locations and generation of lipid mediators involved in pathogen clearance. Cleaves sn-2 fatty acyl chains of cardiolipin, a major component of the inner membrane of mitochondria and bacterial membranes. Promotes phagocytosis of bacteria in macrophages through production of lysophosphatidylethanolamines. Displays bactericidal activity against Gram-positive bacteria by directly hydrolyzing phospholipids of the bacterial membrane. Promotes phagocytosis and killing of ingested fungi likely through controlling phagosome-lysosome fusion and phagosome maturation. Plays a role in biosynthesis of cysteinyl leukotrienes (CysLTs) in myeloid cells. In eosinophils, triggers perinuclear arachidonate release and LTC4 synthesis in a PLA2G4A-independent way. In neutrophils, amplifies CysLTs biosynthesis initiated by PLA2G4A. Promotes immune complex clearance in macrophages via stimulating synthesis of CysLTs, which act through CYSLTR1 to trigger phagocytosis. May regulate antigen processing in antigen-presenting cells. In pulmonary macrophages regulates IL33 production required for activation of group 2 innate lymphoid cells. May play a role in the biosynthesis of N-acyl ethanolamines that regulate energy metabolism. Hydrolyzes N-acyl phosphatidylethanolamines to N-acyl lysophosphatidylethanolamines, which are further cleaved by a lysophospholipase D to release N-acyl ethanolamines. The protein is Phospholipase A2 group V (Pla2g5) of Rattus norvegicus (Rat).